A 142-amino-acid chain; its full sequence is Hemoglobin subunit alpha (142 aa).

In terms of domain architecture, Globin spans 2–142 (VLSPADKTNV…VSTVLTSKYR (141 aa)). S4 is modified (phosphoserine). Position 8 is an N6-succinyllysine (K8). T9 bears the Phosphothreonine mark. K12 bears the N6-succinyllysine mark. K17 is modified (N6-acetyllysine; alternate). K17 carries the N6-succinyllysine; alternate modification. A Phosphotyrosine modification is found at Y25. Position 36 is a phosphoserine (S36). At K41 the chain carries N6-succinyllysine. Phosphoserine is present on S50. Residue H59 coordinates O2. H88 lines the heme b pocket. At S103 the chain carries Phosphoserine. A Phosphothreonine modification is found at T109. Residues S125 and S132 each carry the phosphoserine modification. 2 positions are modified to phosphothreonine: T135 and T138. S139 bears the Phosphoserine mark.

It belongs to the globin family. Heterotetramer of two alpha chains and two beta chains in adult hemoglobin A (HbA); two alpha chains and two delta chains in adult hemoglobin A2 (HbA2); two alpha chains and two epsilon chains in early embryonic hemoglobin Gower-2; two alpha chains and two gamma chains in fetal hemoglobin F (HbF). As to expression, red blood cells.

In terms of biological role, involved in oxygen transport from the lung to the various peripheral tissues. Functionally, hemopressin acts as an antagonist peptide of the cannabinoid receptor CNR1. Hemopressin-binding efficiently blocks cannabinoid receptor CNR1 and subsequent signaling. The chain is Hemoglobin subunit alpha (HBA1) from Pan paniscus (Pygmy chimpanzee).